The chain runs to 159 residues: MSELETGARKAQGKGTPPFAYKALYRASPVDRIGVIKKGVAASDLKRFIAALHVDQKVMFDALNLKTATVNKKAANNQPLSTEDSERVLGLAKLVGQLEDMVEESGETDGFDAPEWLSSWLRQPLPALGGVNPIDLLDTMEGQAVVSRALAQIQSGAFA.

Positions 99–159 (EDMVEESGET…LAQIQSGAFA (61 aa)) are sufficient to neutralize toxin.

It belongs to the MbcA/ParS/Xre antitoxin family. In terms of assembly, forms heterotetrameric ParS(2)-ParT(2) complexes. The 2 antitoxin fragments do not make contact in the crystal structure.

Functionally, antitoxin component of a type II toxin-antitoxin (TA) system. Neutralizes the bacteriostatic effect of cognate toxin ParT by inserting into its active site. In Sphingobium sp. (strain YBL2), this protein is Prs ADP-ribosylating antitoxin.